The chain runs to 196 residues: Imidazoleglycerol-phosphate dehydratase (196 aa).

It belongs to the imidazoleglycerol-phosphate dehydratase family.

The protein localises to the cytoplasm. The enzyme catalyses D-erythro-1-(imidazol-4-yl)glycerol 3-phosphate = 3-(imidazol-4-yl)-2-oxopropyl phosphate + H2O. The protein operates within amino-acid biosynthesis; L-histidine biosynthesis; L-histidine from 5-phospho-alpha-D-ribose 1-diphosphate: step 6/9. This is Imidazoleglycerol-phosphate dehydratase from Caulobacter vibrioides (strain ATCC 19089 / CIP 103742 / CB 15) (Caulobacter crescentus).